A 280-amino-acid chain; its full sequence is UPF0276 protein CC_3255 (280 aa).

It belongs to the UPF0276 family.

In Caulobacter vibrioides (strain ATCC 19089 / CIP 103742 / CB 15) (Caulobacter crescentus), this protein is UPF0276 protein CC_3255.